We begin with the raw amino-acid sequence, 1117 residues long: Cytospin-A (1117 aa).

3 disordered regions span residues 1 to 176 (MKKA…NQIS), 293 to 323 (SLSPEITPGNQSDGGGTLTSSVEGSAPGSVE), and 358 to 390 (SSDDALDAPSSSESEGIPSIERSRKGSSGNASE). Residues 45–90 (TAASLSKTKSSDDLLAGMAGGVTVTNGVKGKKSTCPSAAPSASAPA) show a composition bias toward low complexity. Polar residues predominate over residues 93-117 (TVENKSKISTGTASSTKRNTSTGNK). 2 stretches are compositionally biased toward basic and acidic residues: residues 120–131 (SSTRERLRERTR) and 158–171 (TATECDVRMSKSKS). Residues 168–280 (KSKSDNQISD…LNALGFSLEQ (113 aa)) are a coiled coil. The segment covering 293–303 (SLSPEITPGNQ) has biased composition (polar residues). Low complexity predominate over residues 358 to 377 (SSDDALDAPSSSESEGIPSI). 3 positions are modified to phosphoserine: Ser-384, Ser-385, and Ser-389. Coiled coils occupy residues 394-449 (ACLT…MESL) and 487-807 (RYME…RGRV). A phosphoserine mark is found at Ser-868, Ser-881, and Ser-887. The disordered stretch occupies residues 919–1001 (RTSSASRPAS…SRIREERKDP (83 aa)). Basic and acidic residues predominate over residues 946-956 (RSSEEMKRDIS). Positions 971–990 (TTSPQLSLSSSPTASVTPTT) are enriched in low complexity. One can recognise a Calponin-homology (CH) domain in the interval 1011-1116 (GSKRNALLKW…YVTAIYKYFE (106 aa)).

The protein belongs to the cytospin-A family. As to quaternary structure, may interact with both microtubules and actin cytoskeleton.

The protein resides in the cytoplasm. It localises to the cytoskeleton. Its subcellular location is the spindle. It is found in the cell junction. The protein localises to the gap junction. Involved in cytokinesis and spindle organization. May play a role in actin cytoskeleton organization and microtubule stabilization and hence required for proper cell adhesion and migration. This is Cytospin-A (SPECC1L) from Pan troglodytes (Chimpanzee).